The sequence spans 1382 residues: Hepatocyte growth factor receptor (1382 aa).

The signal sequence occupies residues 1 to 24 (MRAPAVLAPGILVLLFTLVQRSCG). Residues 25-933 (ECKEALVKSE…VIVQPDQNFT (909 aa)) are Extracellular-facing. In terms of domain architecture, Sema spans 27–516 (KEALVKSEMN…TGKKITKIPL (490 aa)). Residue asparagine 45 is glycosylated (N-linked (GlcNAc...) asparagine). Intrachain disulfides connect cysteine 95-cysteine 101, cysteine 98-cysteine 160, cysteine 133-cysteine 141, and cysteine 173-cysteine 176. Asparagine 106 carries N-linked (GlcNAc...) asparagine glycosylation. 2 N-linked (GlcNAc...) asparagine glycosylation sites follow: asparagine 203 and asparagine 359. 2 disulfide bridges follow: cysteine 299–cysteine 364 and cysteine 386–cysteine 398. Residues asparagine 400 and asparagine 406 are each glycosylated (N-linked (GlcNAc...) asparagine). 4 disulfide bridges follow: cysteine 521-cysteine 539, cysteine 527-cysteine 562, cysteine 530-cysteine 546, and cysteine 542-cysteine 552. IPT/TIG domains lie at 564–656 (PTIY…FSYV), 658–740 (PIIT…FSYQ), and 743–837 (PIVY…LIYV). Threonine 583 carries an O-linked (Man) threonine glycan. N-linked (GlcNAc...) asparagine glycosylation is found at asparagine 608 and asparagine 636. Threonine 677 and threonine 762 each carry an O-linked (Man) threonine glycan. 3 N-linked (GlcNAc...) asparagine glycosylation sites follow: asparagine 786, asparagine 880, and asparagine 931. Residues 934–956 (GLIVGVISISLIVLLLLGLFLWL) traverse the membrane as a helical segment. The Cytoplasmic portion of the chain corresponds to 957–1382 (KRRKQIKDLG…QDIIDGEGDT (426 aa)). At serine 967 the chain carries Phosphoserine. Phosphothreonine is present on threonine 978. Serine 991, serine 998, and serine 1001 each carry phosphoserine. Tyrosine 1004 is modified (phosphotyrosine). The Protein kinase domain occupies 1079–1346 (VHFNEVIGRG…RISAIFSTFI (268 aa)). ATP-binding positions include 1085-1093 (IGRGHFGCV) and lysine 1111. Residue aspartate 1205 is the Proton acceptor of the active site. The tract at residues 1213–1382 (LDEKFTVKVA…QDIIDGEGDT (170 aa)) is interaction with RANBP9. Tyrosine 1231 carries the phosphotyrosine modification. Residues tyrosine 1235 and tyrosine 1236 each carry the phosphotyrosine; by autocatalysis modification. Threonine 1290 carries the post-translational modification Phosphothreonine. The interval 1321 to 1360 (WHPKAELRPSFSELVSRISAIFSTFIGEHYVHVNATYVNV) is interaction with MUC20. Phosphotyrosine; by autocatalysis occurs at positions 1350 and 1357. The residue at position 1366 (tyrosine 1366) is a Phosphotyrosine.

Belongs to the protein kinase superfamily. Tyr protein kinase family. As to quaternary structure, heterodimer made of an alpha chain (50 kDa) and a beta chain (145 kDa) which are disulfide linked. Binds PLXNB1. Interacts when phosphorylated with downstream effectors including STAT3, PIK3R1, SRC, PCLG1, GRB2 and GAB1. Interacts with SPSB1, SPSB2 and SPSB4. Interacts with INPP5D/SHIP1. When phosphorylated at Tyr-1357, interacts with INPPL1/SHIP2. Interacts with RANBP9 and RANBP10, as well as SPSB1, SPSB2, SPSB3 and SPSB4. SPSB1 binding occurs in the presence and in the absence of HGF, however HGF treatment has a positive effect on this interaction. Interacts with MUC20; prevents interaction with GRB2 and suppresses hepatocyte growth factor-induced cell proliferation. Interacts with GRB10. Interacts with PTPN1 and PTPN2. Interacts with HSP90AA1 and HSP90AB1; the interaction suppresses MET kinase activity. Interacts with tensin TNS3. Interacts (when phosphorylated) with tensin TNS4 (via SH2 domain); the interaction increases MET protein stability by inhibiting MET endocytosis and subsequent lysosomal degradation. In terms of processing, autophosphorylated in response to ligand binding on Tyr-1235 and Tyr-1236 in the kinase domain leading to further phosphorylation of Tyr-1350 and Tyr-1357 in the C-terminal multifunctional docking site. Dephosphorylated by PTPRJ at Tyr-1350 and Tyr-1366. Dephosphorylated by PTPN1 and PTPN2. Ubiquitinated. Ubiquitination by CBL regulates the receptor stability and activity through proteasomal degradation. Post-translationally, O-mannosylation of IPT/TIG domains by TMEM260 is required for protein maturation. O-mannosylated residues are composed of single mannose glycans that are not elongated or modified.

The protein resides in the membrane. It catalyses the reaction L-tyrosyl-[protein] + ATP = O-phospho-L-tyrosyl-[protein] + ADP + H(+). In its inactive state, the C-terminal tail interacts with the catalytic domain and inhibits the kinase activity. Upon ligand binding, the C-terminal tail is displaced and becomes phosphorylated, thus increasing the kinase activity. Functionally, receptor tyrosine kinase that transduces signals from the extracellular matrix into the cytoplasm by binding to hepatocyte growth factor/HGF ligand. Regulates many physiological processes including proliferation, scattering, morphogenesis and survival. Ligand binding at the cell surface induces autophosphorylation of MET on its intracellular domain that provides docking sites for downstream signaling molecules. Following activation by ligand, interacts with the PI3-kinase subunit PIK3R1, PLCG1, SRC, GRB2, STAT3 or the adapter GAB1. Recruitment of these downstream effectors by MET leads to the activation of several signaling cascades including the RAS-ERK, PI3 kinase-AKT, or PLCgamma-PKC. The RAS-ERK activation is associated with the morphogenetic effects while PI3K/AKT coordinates prosurvival effects. During embryonic development, MET signaling plays a role in gastrulation, development and migration of muscles and neuronal precursors, angiogenesis and kidney formation. In adults, participates in wound healing as well as organ regeneration and tissue remodeling. Also promotes differentiation and proliferation of hematopoietic cells. This chain is Hepatocyte growth factor receptor (MET), found in Mustela putorius furo (European domestic ferret).